Reading from the N-terminus, the 83-residue chain is Large ribosomal subunit protein bL27 (83 aa).

Residues 1–26 are disordered; the sequence is MAHKKAGGSSKNGRDSRGQRRGVKRF.

This sequence belongs to the bacterial ribosomal protein bL27 family.

The chain is Large ribosomal subunit protein bL27 from Desulfosudis oleivorans (strain DSM 6200 / JCM 39069 / Hxd3) (Desulfococcus oleovorans).